The primary structure comprises 68 residues: MDENEYDEYTQISWSDTIKGLIKDPESRNSILENLKNISVFIASSMIIAKYAHKICEPQLLSKILFES.

This is an uncharacterized protein from Dictyostelium discoideum (Social amoeba).